The sequence spans 796 residues: MSLNFTEYEAKWQKKWADAKAFQAETTSSKPKYYALDMFPYPSASGLHVGHMASYTPGDIISRYKRVNGFNVLHPMGYDAFGLPAEQYAIQTGVHPAITTKKAIDSFRKTLQTFGFSFDWSREISTCEPDYYKWTQFIFLKLYERGLAYQKEVPVNWCPALKTVLANDEVVDGKSERGGHPVIRVPMKQWMLKITDYAERLLNDLDKLDWPERTKEGQRNWIGKSEGARITFKVHGEKDTFEVFTTRPDTLFGVTFMVMAPEHPLVKKITSQPQYTAVENYIADTAKKSEVDRKASTEKTGVFTGAHATHPITGDKIEIWISDYVLMDYGTGAIMAVPGHDARDFEFATKFNIPIKSVLESDMLPFEGDSIMINSEFLDGLNKTEAISKMLKHLEENKLGVREVQYKLRDWLFSRQRYWGEPFPIVHFADGSKGVPVNELPVILPEVADYEPADTGEAPLARNADWVKYMDGDKEGRRETDTMPGAAGSSWYFLRYIDPKNTEAPFSPEAEKYWMPVDLYVGGPEHTVGHLLYARFWTKVLFDCGLVTHDEPFQKLAHQGMILGPDGEKMSKSRGNVISPEDIARSHGADALRTFISFMGPVDKDKPWAPTGIDGVKRFLDRITRLVVNDDGQLVATSEALTPEIEKLVHKTIKKVTEDIESMSFNTAISAMMILVNELYRAECRSVLAVKPLVQILAPFAPHLAEELWEKMNGEGLCALAPWPKYDNTLCADDTVTIGVQVNGKMRGTIEIGVAASEQEAVAAAKAVQQVAAVLGDKNPDKVIYKAGKILNLIVK.

The short motif at 40-51 (PYPSASGLHVGH) is the 'HIGH' region element. The short motif at 569 to 573 (KMSKS) is the 'KMSKS' region element. Residue Lys-572 coordinates ATP.

Belongs to the class-I aminoacyl-tRNA synthetase family.

Its subcellular location is the cytoplasm. It catalyses the reaction tRNA(Leu) + L-leucine + ATP = L-leucyl-tRNA(Leu) + AMP + diphosphate. In Bdellovibrio bacteriovorus (strain ATCC 15356 / DSM 50701 / NCIMB 9529 / HD100), this protein is Leucine--tRNA ligase.